A 526-amino-acid chain; its full sequence is Cytochrome P450 monooxygenase 58 (526 aa).

3 helical membrane-spanning segments follow: residues 13 to 33, 115 to 135, and 306 to 326; these read IASS…LLLI, FIMA…GYGK, and IGAG…AMTL. Residue C451 participates in heme binding.

The protein belongs to the cytochrome P450 family. It depends on heme as a cofactor.

The protein resides in the membrane. It participates in secondary metabolite biosynthesis. Its function is as follows. Cytochrome P450 monooxygenase that is able to use delta(6)-protoilludene as a substrate to produce delta(6)-protoilludene-8-ol. The chain is Cytochrome P450 monooxygenase 58 from Postia placenta (strain ATCC 44394 / Madison 698-R) (Brown rot fungus).